Reading from the N-terminus, the 100-residue chain is Ferredoxin-2 (100 aa).

In terms of domain architecture, 2Fe-2S ferredoxin-type spans 4–97 (YKVTLINEEE…DCTIMTHQES (94 aa)). [2Fe-2S] cluster contacts are provided by Cys42, Cys47, Cys50, and Cys81.

It belongs to the 2Fe2S plant-type ferredoxin family. [2Fe-2S] cluster serves as cofactor.

Its function is as follows. Ferredoxins are iron-sulfur proteins that transfer electrons in a wide variety of metabolic reactions. This Aphanothece sacrum protein is Ferredoxin-2.